The primary structure comprises 468 residues: MQKPQTIFEKIWENHMVHEEEGKPSLLYIDQHLVHEVTSPQAFEGLRLNNRKVRRPDLTFATMDHNVPTVNRESFKDEISKKQMDALKKNCEEFGIKLADMYHPDQGIVHVIGPQLGLTQPGKTIVCGDSHTSTHGAFGALAFGIGTSEVEHVLATQTIWQDKPKTLNVKVIGELGIGVTAKDLILAIIAKFGVQFGTGYVMEYTGESIRKMSMEERMTICNMSIEAGARAGLISPDQTTVDYLRGREMVPKGEAYDTLAAEWLQLATDEDAVYDDTVTIHANEIEPQVTWGTNPGMCVPISSSTPSIEKASYPDEVERALEYMGLTENQLMTSIEVDHVFIGSCTNSRLSDLKKAAAIVKGKKVKAGIRAMVVPGSFLVKQKAEEIGLDQVFMDAGFEWRNSGCSMCLGMNDDIVPAGGRCASTSNRNFEGRQGNGARTHLVSPEMAAAAAIEGHFVDVRSYASVPS.

Cysteine 345, cysteine 405, and cysteine 408 together coordinate [4Fe-4S] cluster.

The protein belongs to the aconitase/IPM isomerase family. LeuC type 1 subfamily. In terms of assembly, heterodimer of LeuC and LeuD. The cofactor is [4Fe-4S] cluster.

It catalyses the reaction (2R,3S)-3-isopropylmalate = (2S)-2-isopropylmalate. The protein operates within amino-acid biosynthesis; L-leucine biosynthesis; L-leucine from 3-methyl-2-oxobutanoate: step 2/4. Its function is as follows. Catalyzes the isomerization between 2-isopropylmalate and 3-isopropylmalate, via the formation of 2-isopropylmaleate. This Oceanobacillus iheyensis (strain DSM 14371 / CIP 107618 / JCM 11309 / KCTC 3954 / HTE831) protein is 3-isopropylmalate dehydratase large subunit.